A 337-amino-acid chain; its full sequence is Adenine deaminase (337 aa).

Residues histidine 17, histidine 19, and histidine 197 each coordinate Zn(2+). The active-site Proton donor is glutamate 200. Aspartate 278 contributes to the Zn(2+) binding site. Residue aspartate 279 coordinates substrate.

It belongs to the metallo-dependent hydrolases superfamily. Adenosine and AMP deaminases family. Adenine deaminase type 2 subfamily. Zn(2+) serves as cofactor.

It carries out the reaction adenine + H2O + H(+) = hypoxanthine + NH4(+). Functionally, catalyzes the hydrolytic deamination of adenine to hypoxanthine. Plays an important role in the purine salvage pathway and in nitrogen catabolism. The chain is Adenine deaminase from Zymomonas mobilis subsp. mobilis (strain ATCC 31821 / ZM4 / CP4).